The chain runs to 464 residues: Glutamyl-tRNA reductase (464 aa).

Residues 47-50 (TCNR), S145, 150-152 (EPQ), and Q156 each bind substrate. C48 (nucleophile) is an active-site residue. Residue 225–230 (AAGEMN) participates in NADP(+) binding.

The protein belongs to the glutamyl-tRNA reductase family. In terms of assembly, homodimer.

It catalyses the reaction (S)-4-amino-5-oxopentanoate + tRNA(Glu) + NADP(+) = L-glutamyl-tRNA(Glu) + NADPH + H(+). It functions in the pathway porphyrin-containing compound metabolism; protoporphyrin-IX biosynthesis; 5-aminolevulinate from L-glutamyl-tRNA(Glu): step 1/2. Catalyzes the NADPH-dependent reduction of glutamyl-tRNA(Glu) to glutamate 1-semialdehyde (GSA). This Psychrobacter cryohalolentis (strain ATCC BAA-1226 / DSM 17306 / VKM B-2378 / K5) protein is Glutamyl-tRNA reductase.